Here is a 631-residue protein sequence, read N- to C-terminus: Phosphomethylpyrimidine synthase (631 aa).

Substrate contacts are provided by residues N239, M268, Y297, H333, 353–355, 394–397, and E433; these read SRG and DGLR. H437 contacts Zn(2+). Y460 is a substrate binding site. H501 provides a ligand contact to Zn(2+). C581, C584, and C589 together coordinate [4Fe-4S] cluster.

This sequence belongs to the ThiC family. Homodimer. The cofactor is [4Fe-4S] cluster.

The enzyme catalyses 5-amino-1-(5-phospho-beta-D-ribosyl)imidazole + S-adenosyl-L-methionine = 4-amino-2-methyl-5-(phosphooxymethyl)pyrimidine + CO + 5'-deoxyadenosine + formate + L-methionine + 3 H(+). The protein operates within cofactor biosynthesis; thiamine diphosphate biosynthesis. In terms of biological role, catalyzes the synthesis of the hydroxymethylpyrimidine phosphate (HMP-P) moiety of thiamine from aminoimidazole ribotide (AIR) in a radical S-adenosyl-L-methionine (SAM)-dependent reaction. The protein is Phosphomethylpyrimidine synthase of Salmonella heidelberg (strain SL476).